The chain runs to 393 residues: Interleukin-1 receptor type 2 (393 aa).

The signal sequence occupies residues 1-13 (MFRLYVLVMGVSA). Residues 14–347 (FTLQPAAHTG…RTTVKEPPPT (334 aa)) lie on the Extracellular side of the membrane. 3 disulfides stabilise this stretch: cysteine 28-cysteine 116, cysteine 50-cysteine 108, and cysteine 152-cysteine 207. Ig-like C2-type domains follow at residues 29–120 (PVRG…DKVS), 134–221 (PFIS…YNIT), and 237–342 (PVII…TTVK). Residues asparagine 66, asparagine 72, and asparagine 112 are each glycosylated (N-linked (GlcNAc...) asparagine). N-linked (GlcNAc...) asparagine glycosylation is found at asparagine 219 and asparagine 277. An intrachain disulfide couples cysteine 258 to cysteine 326. Residues 348–368 (FSWGIVLAPLALAFLVLGGIW) traverse the membrane as a helical segment. The Cytoplasmic segment spans residues 369-393 (MHRRCKHRTGKADGLTVLRPHHQDF).

Belongs to the interleukin-1 receptor family. As to quaternary structure, forms a non-signaling receptor complex consisting of IL1R2 and IL1RAP. A soluble form (sIL1R2) can also be produced by proteolytic cleavage at the cell surface (shedding) involving a metalloproteinase.

It is found in the secreted. It localises to the cell membrane. In terms of biological role, non-signaling receptor for IL1A, IL1B and IL1RN. Reduces IL1B activities. Serves as a decoy receptor by competitive binding to IL1B and preventing its binding to IL1R1. Also modulates cellular response through non-signaling association with IL1RAP after binding to IL1B. IL1R2 (membrane and secreted forms) preferentially binds IL1B and poorly IL1A and IL1RN. The secreted IL1R2 recruits secreted IL1RAP with high affinity; this complex formation may be the dominant mechanism for neutralization of IL1B by secreted/soluble receptors. The chain is Interleukin-1 receptor type 2 (IL1R2) from Chlorocebus aethiops (Green monkey).